The following is a 494-amino-acid chain: Protein translocase subunit SecD (494 aa).

6 helical membrane passes run 7 to 27 (WFAL…NLPF), 322 to 342 (LIAA…FYRL), 345 to 365 (FIAI…YALI), 372 to 392 (PGVA…VLIF), 420 to 440 (IIDG…LGTG), and 441 to 461 (FVKG…FTAL).

It belongs to the SecD/SecF family. SecD subfamily. In terms of assembly, forms a complex with SecF. Part of the essential Sec protein translocation apparatus which comprises SecA, SecYEG and auxiliary proteins SecDF. Other proteins may also be involved.

It localises to the cell inner membrane. Its function is as follows. Part of the Sec protein translocase complex. Interacts with the SecYEG preprotein conducting channel. SecDF uses the proton motive force (PMF) to complete protein translocation after the ATP-dependent function of SecA. Probably participates in protein translocation into and across both the cytoplasmic and thylakoid membranes in cyanobacterial cells. This is Protein translocase subunit SecD from Prochlorococcus marinus (strain SARG / CCMP1375 / SS120).